The chain runs to 289 residues: Diaminopimelate epimerase (289 aa).

The substrate site is built by Asn-11 and Asn-78. Cys-87 (proton donor) is an active-site residue. Residues 88–89 (GN), Asn-163, Asn-199, and 217–218 (ER) each bind substrate. The active-site Proton acceptor is the Cys-226. 227–228 (GT) is a binding site for substrate.

This sequence belongs to the diaminopimelate epimerase family. Homodimer.

It localises to the cytoplasm. The catalysed reaction is (2S,6S)-2,6-diaminopimelate = meso-2,6-diaminopimelate. The protein operates within amino-acid biosynthesis; L-lysine biosynthesis via DAP pathway; DL-2,6-diaminopimelate from LL-2,6-diaminopimelate: step 1/1. In terms of biological role, catalyzes the stereoinversion of LL-2,6-diaminopimelate (L,L-DAP) to meso-diaminopimelate (meso-DAP), a precursor of L-lysine and an essential component of the bacterial peptidoglycan. This is Diaminopimelate epimerase from Rhodococcus jostii (strain RHA1).